Consider the following 398-residue polypeptide: Pectate lyase 1 (398 aa).

The N-terminal stretch at 1–25 (MGIKHCCYILYFTLALVTLLQPVRS) is a signal peptide. Residue N37 is glycosylated (N-linked (GlcNAc...) asparagine). C55 and C72 are oxidised to a cystine. Residues D195, D219, and D223 each coordinate Ca(2+). R275 is a catalytic residue.

The protein belongs to the polysaccharide lyase 1 family. Amb a subfamily. In terms of assembly, monomer. Ca(2+) serves as cofactor. Post-translationally, the N-terminus is blocked. Pollen and flowers.

It catalyses the reaction Eliminative cleavage of (1-&gt;4)-alpha-D-galacturonan to give oligosaccharides with 4-deoxy-alpha-D-galact-4-enuronosyl groups at their non-reducing ends.. It functions in the pathway glycan metabolism; pectin degradation; 2-dehydro-3-deoxy-D-gluconate from pectin: step 2/5. In terms of biological role, has pectate lyase activity. The polypeptide is Pectate lyase 1 (Ambrosia artemisiifolia (Common ragweed)).